The sequence spans 1088 residues: Tyrocidine synthase 1 (1088 aa).

A Carrier domain is found at 528 to 602 (PPRTETESIL…QVALFVKSTT (75 aa)). The residue at position 563 (Ser563) is an O-(pantetheine 4'-phosphoryl)serine.

It belongs to the ATP-dependent AMP-binding enzyme family. As to quaternary structure, large multienzyme complex of TycA, TycB and TycC. Requires pantetheine 4'-phosphate as cofactor.

The catalysed reaction is L-phenylalanine + ATP + H2O = D-phenylalanine + AMP + diphosphate + H(+). It participates in antibiotic biosynthesis; tyrocidine biosynthesis. In the first step of peptide synthesis this enzyme activates phenylalanine and racemizes it to the D-isomer. This chain is Tyrocidine synthase 1 (tycA), found in Brevibacillus parabrevis.